The chain runs to 190 residues: Lysozyme g (190 aa).

The span at 1-10 (MPYGKIEDIK) shows a compositional bias: basic and acidic residues. A disordered region spans residues 1-31 (MPYGKIEDIKTSGASDVTAAQDGLKEGGWKS). Residues Glu-71 and Asp-84 contribute to the active site.

This sequence belongs to the glycosyl hydrolase 23 family.

The catalysed reaction is Hydrolysis of (1-&gt;4)-beta-linkages between N-acetylmuramic acid and N-acetyl-D-glucosamine residues in a peptidoglycan and between N-acetyl-D-glucosamine residues in chitodextrins.. The sequence is that of Lysozyme g from Takifugu rubripes (Japanese pufferfish).